We begin with the raw amino-acid sequence, 98 residues long: NADH-ubiquinone oxidoreductase chain 4L (98 aa).

3 consecutive transmembrane segments (helical) span residues 1–21 (MSLV…GLLM), 29–49 (SLLC…LTIL), and 61–81 (IILL…LVMV).

The protein belongs to the complex I subunit 4L family. As to quaternary structure, core subunit of respiratory chain NADH dehydrogenase (Complex I) which is composed of 45 different subunits.

The protein localises to the mitochondrion inner membrane. It catalyses the reaction a ubiquinone + NADH + 5 H(+)(in) = a ubiquinol + NAD(+) + 4 H(+)(out). In terms of biological role, core subunit of the mitochondrial membrane respiratory chain NADH dehydrogenase (Complex I) which catalyzes electron transfer from NADH through the respiratory chain, using ubiquinone as an electron acceptor. Part of the enzyme membrane arm which is embedded in the lipid bilayer and involved in proton translocation. The protein is NADH-ubiquinone oxidoreductase chain 4L (MT-ND4L) of Muntiacus vuquangensis (Giant muntjac).